The primary structure comprises 393 residues: NAD(P)H-quinone oxidoreductase subunit H, chloroplastic (393 aa).

It belongs to the complex I 49 kDa subunit family. In terms of assembly, NDH is composed of at least 16 different subunits, 5 of which are encoded in the nucleus.

The protein resides in the plastid. It is found in the chloroplast thylakoid membrane. It carries out the reaction a plastoquinone + NADH + (n+1) H(+)(in) = a plastoquinol + NAD(+) + n H(+)(out). The enzyme catalyses a plastoquinone + NADPH + (n+1) H(+)(in) = a plastoquinol + NADP(+) + n H(+)(out). In terms of biological role, NDH shuttles electrons from NAD(P)H:plastoquinone, via FMN and iron-sulfur (Fe-S) centers, to quinones in the photosynthetic chain and possibly in a chloroplast respiratory chain. The immediate electron acceptor for the enzyme in this species is believed to be plastoquinone. Couples the redox reaction to proton translocation, and thus conserves the redox energy in a proton gradient. This is NAD(P)H-quinone oxidoreductase subunit H, chloroplastic from Pelargonium hortorum (Common geranium).